Here is a 669-residue protein sequence, read N- to C-terminus: UvrABC system protein B (669 aa).

Residues 26–414 (TNFHAGIAKQ…AGEVIELLVR (389 aa)) enclose the Helicase ATP-binding domain. ATP is bound at residue 39–46 (GVTGSGKT). The short motif at 92-115 (YYDYYQPEAYVPASDTFIEKDSSI) is the Beta-hairpin element. Residues 435–597 (LISQINVCIK…SVVRPISDIL (163 aa)) form the Helicase C-terminal domain. The region spanning 631–666 (AAQMKVLEQQMYQHARDLEFEDAARIRDQIQRLREA) is the UVR domain.

Belongs to the UvrB family. Forms a heterotetramer with UvrA during the search for lesions. Interacts with UvrC in an incision complex.

The protein localises to the cytoplasm. Functionally, the UvrABC repair system catalyzes the recognition and processing of DNA lesions. A damage recognition complex composed of 2 UvrA and 2 UvrB subunits scans DNA for abnormalities. Upon binding of the UvrA(2)B(2) complex to a putative damaged site, the DNA wraps around one UvrB monomer. DNA wrap is dependent on ATP binding by UvrB and probably causes local melting of the DNA helix, facilitating insertion of UvrB beta-hairpin between the DNA strands. Then UvrB probes one DNA strand for the presence of a lesion. If a lesion is found the UvrA subunits dissociate and the UvrB-DNA preincision complex is formed. This complex is subsequently bound by UvrC and the second UvrB is released. If no lesion is found, the DNA wraps around the other UvrB subunit that will check the other stand for damage. This is UvrABC system protein B from Xylella fastidiosa (strain 9a5c).